Consider the following 125-residue polypeptide: Glycoprotein hormones alpha chain (125 aa).

A signal peptide spans 1–30 (MVSAVTTMGCMKAAGVSLLLLYFLLNAADS). 5 disulfide bridges follow: Cys-41-Cys-64, Cys-44-Cys-93, Cys-61-Cys-114, Cys-65-Cys-116, and Cys-92-Cys-119. N-linked (GlcNAc...) asparagine glycans are attached at residues Asn-85 and Asn-110.

Belongs to the glycoprotein hormones subunit alpha family. Heterodimer. Glycoprotein hormones are heterodimers composed of a common alpha chain described here and a unique beta chain which confers their biological specificity to the different hormones.

The protein localises to the secreted. Its function is as follows. Shared alpha chain of heterodimeric glycoprotein hormones. These hormones bind specific receptors on target cells that in turn activate downstream signaling pathways. Involved in gametogenesis and steroidogenesis. This chain is Glycoprotein hormones alpha chain (cga), found in Fundulus heteroclitus (Killifish).